Reading from the N-terminus, the 616-residue chain is MALLQISEPGLSAAPHQRRLAAGIDLGTTNSLVATVRSGQAETLPDHEGRHLLPSVVHYQQQGHTVGYAARDNAAQDTANTISSVKRMMGRSLADIQARYPHLPYRFKASVNGLPMIDTAAGLLNPVRVSADILKALAARASESLSGELDGVVITVPAYFDDAQRQGTKDAARLAGLHVLRLLNEPTAAAIAYGLDSGKEGVIAVYDLGGGTFDISILRLSRGVFEVLATGGDSALGGDDFDHLLADYIREQAGIADRSDNRVQRELLDAAITAKIALSDADTVRVNVAGWQGEITREQFNDLISALVKRTLLACRRALKDAGVEPQDVLEVVMVGGSTRVPLVRERVGEFFGRTPLTAIDPDKVVAIGAAIQADILVGNKPDSEMLLLDVIPLSLGLETMGGLVEKVIPRNTTIPVARAQDFTTFKDGQTAMSIHVMQGERELVQDCRSLARFALRGIPPLPAGGAHIRVTFQVDADGLLSVTAMEKSTGVEASIQVKPSYGLTDSEIASMIKDSMSFAEQDVKARMLAEQKVEAARVLESLTGALTADAALLSAAERQCIDDAAAHLSAVAQGDDVDAIEQAIKNVDKQTQEFAARRMDQSVRRALKGHSVDEV.

Belongs to the heat shock protein 70 family.

Its function is as follows. Chaperone involved in the maturation of iron-sulfur cluster-containing proteins. Has a low intrinsic ATPase activity which is markedly stimulated by HscB. Involved in the maturation of IscU. The sequence is that of Chaperone protein HscA from Salmonella paratyphi A (strain ATCC 9150 / SARB42).